Consider the following 909-residue polypeptide: Disintegrin and metalloproteinase domain-containing protein 12 (909 aa).

Residues 1–28 (MAARPLPVSPARALLLALAGALLAPCEA) form the signal peptide. A propeptide spanning residues 29–207 (RGVSLWNQGR…SQTWARRHKR (179 aa)) is cleaved from the precursor. N111 and N149 each carry an N-linked (GlcNAc...) asparagine glycan. Positions 177-184 (GSCGSHHN) match the Cysteine switch motif. Zn(2+) contacts are provided by C179 and H350. At 208–708 (ETLKATKYVE…GPIRQADNQG (501 aa)) the chain is on the extracellular side. In terms of domain architecture, Peptidase M12B spans 214-416 (KYVELVIVAD…GMGVCLFNLP (203 aa)). Intrachain disulfides connect C325–C411, C367–C395, and C369–C378. The active site involves E351. The Zn(2+) site is built by H354 and H360. N-linked (GlcNAc...) asparagine glycans are attached at residues N381 and N452. A Disintegrin domain is found at 424 to 510 (GQKCGNRFVE…HCPANVYLHD (87 aa)). C482 and C502 are oxidised to a cystine. N-linked (GlcNAc...) asparagine glycosylation occurs at N651. Positions 656–688 (GVHECAMQCHGRGVCNNRKNCHCEAHWAPPFCD) constitute an EGF-like domain. 3 cysteine pairs are disulfide-bonded: C660-C670, C664-C676, and C678-C687. Residues 709–729 (LTIGILVTILCLLAAGFVVYL) traverse the membrane as a helical segment. Residues 730–909 (KRKTLIRLLF…PRSTHTAYIK (180 aa)) lie on the Cytoplasmic side of the membrane. Positions 822–862 (LHRAPRAPSVPARPLPAKPALRQAQGTCKPNPPQKPLPADP) are disordered. The SH3-binding; class II motif lies at 828–834 (APSVPAR). Positions 834-841 (RPLPAKPA) match the SH3-binding; class I motif. The segment covering 851–860 (PNPPQKPLPA) has biased composition (pro residues). The SH3-binding; class I signature appears at 885 to 891 (RLAPLRP). Y907 carries the phosphotyrosine; by SRC modification.

In terms of assembly, interacts with alpha-actinin-2 and with syndecans. Interacts with SH3PXD2A. Interacts with FST3. Interacts with RACK1; the interaction is required for PKC-dependent translocation of ADAM12 to the cell membrane. Zn(2+) serves as cofactor. The precursor is cleaved by a furin endopeptidase. As to expression, isoform 1 is expressed in placenta and skeletal, cardiac, and smooth muscle. Isoform 2 seems to be expressed only in placenta or in embryo and fetus. Both forms were expressed in some tumor cells lines. Not detected in brain, lung, liver, kidney or pancreas.

It is found in the cell membrane. The protein resides in the secreted. In terms of biological role, involved in skeletal muscle regeneration, specifically at the onset of cell fusion. Also involved in macrophage-derived giant cells (MGC) and osteoclast formation from mononuclear precursors. The sequence is that of Disintegrin and metalloproteinase domain-containing protein 12 (ADAM12) from Homo sapiens (Human).